The sequence spans 168 residues: tRNA-splicing endonuclease (168 aa).

Residues Y107, H114, and K145 contribute to the active site.

The protein belongs to the tRNA-intron endonuclease family. Archaeal short subfamily. As to quaternary structure, homotetramer; although the tetramer contains four active sites, only two participate in the cleavage. Therefore, it should be considered as a dimer of dimers.

The enzyme catalyses pretRNA = a 3'-half-tRNA molecule with a 5'-OH end + a 5'-half-tRNA molecule with a 2',3'-cyclic phosphate end + an intron with a 2',3'-cyclic phosphate and a 5'-hydroxyl terminus.. Functionally, endonuclease that removes tRNA introns. Cleaves pre-tRNA at the 5'- and 3'-splice sites to release the intron. The products are an intron and two tRNA half-molecules bearing 2',3' cyclic phosphate and 5'-OH termini. Recognizes a pseudosymmetric substrate in which 2 bulged loops of 3 bases are separated by a stem of 4 bp. In Thermococcus gammatolerans (strain DSM 15229 / JCM 11827 / EJ3), this protein is tRNA-splicing endonuclease.